A 517-amino-acid chain; its full sequence is V-type proton ATPase subunit B (517 aa).

Position 4 is a phosphoserine (S4). K14 participates in a covalent cross-link: Glycyl lysine isopeptide (Lys-Gly) (interchain with G-Cter in ubiquitin). S137 bears the Phosphoserine mark. Residue R381 participates in ATP binding. The tract at residues 487 to 517 (RARDDADEDEEDPDTRSSGKKKDASQEESLI) is disordered. A compositionally biased stretch (basic and acidic residues) spans 500–511 (DTRSSGKKKDAS). 2 positions are modified to phosphoserine: S503 and S504. K508 is covalently cross-linked (Glycyl lysine isopeptide (Lys-Gly) (interchain with G-Cter in ubiquitin)). S511 carries the phosphoserine; by ATM or ATR modification. Phosphoserine is present on S515.

The protein belongs to the ATPase alpha/beta chains family. In terms of assembly, V-ATPase is a heteromultimeric enzyme composed of a peripheral catalytic V1 complex (components A to H) attached to an integral membrane V0 proton pore complex (components: a, c, c', c'', d, e, f and VOA1). Interacts with RAV1 and RAV2 components of the RAVE complex, which are essential for the stability and assembly of V-ATPase.

The protein resides in the vacuole membrane. Its function is as follows. Non-catalytic subunit of the V1 complex of vacuolar(H+)-ATPase (V-ATPase), a multisubunit enzyme composed of a peripheral complex (V1) that hydrolyzes ATP and a membrane integral complex (V0) that translocates protons. V-ATPase is responsible for acidifying and maintaining the pH of intracellular compartments. This chain is V-type proton ATPase subunit B (VMA2), found in Saccharomyces cerevisiae (strain ATCC 204508 / S288c) (Baker's yeast).